A 207-amino-acid chain; its full sequence is Superoxide dismutase [Fe] (207 aa).

Fe cation is bound by residues histidine 28, histidine 76, aspartate 160, and histidine 164.

The protein belongs to the iron/manganese superoxide dismutase family. In terms of assembly, homotetramer. The cofactor is Fe cation.

It localises to the secreted. The catalysed reaction is 2 superoxide + 2 H(+) = H2O2 + O2. Functionally, destroys superoxide anion radicals which are normally produced within the cells and which are toxic to biological systems. The polypeptide is Superoxide dismutase [Fe] (sodB) (Mycobacterium tuberculosis (strain CDC 1551 / Oshkosh)).